The chain runs to 228 residues: Cell surface Cu-only superoxide dismutase 5 (228 aa).

The signal sequence occupies residues 1-15 (MKYLSIFLLATFALA). A glycan (N-linked (GlcNAc...) asparagine) is linked at N53. 2 residues coordinate Cu cation: H75 and H77. N-linked (GlcNAc...) asparagine glycosylation is present at N86. C87 and C162 form a disulfide bridge. H93 lines the Cu cation pocket. An N-linked (GlcNAc...) asparagine glycan is attached at N98. H153 contributes to the Cu cation binding site. N156, N164, N176, N181, and N192 each carry an N-linked (GlcNAc...) asparagine glycan. The span at 176–201 (NTTMSNSSSSSSQSAVNTSSSMASTA) shows a compositional bias: low complexity. The interval 176-204 (NTTMSNSSSSSSQSAVNTSSSMASTAPQG) is disordered. N205 carries GPI-anchor amidated asparagine lipidation. Positions 206–228 (GAERAVVNGLLAAGVVGVIAALI) are cleaved as a propeptide — removed in mature form.

The protein belongs to the Cu-Zn superoxide dismutase family. Monomer. Cu cation is required as a cofactor. The GPI-anchor is attached to the protein in the endoplasmic reticulum and serves to target the protein to the cell surface. There, the glucosamine-inositol phospholipid moiety is cleaved off and the GPI-modified mannoprotein is covalently attached via its lipidless GPI glycan remnant to the 1,6-beta-glucan of the outer cell wall layer.

Its subcellular location is the secreted. The protein localises to the cell wall. It is found in the membrane. It catalyses the reaction 2 superoxide + 2 H(+) = H2O2 + O2. With respect to regulation, secreted in a disulfide-oxidized form and apo-pools of secreted SOD5 can readily capture extracellular copper for rapid induction of enzyme activity. Its function is as follows. Superoxide dismutases serve to convert damaging superoxide radicals, a key form of ROS, to less damaging hydrogen peroxide that can be converted into water by catalase action. Degrades host-derived reactive oxygen species to escape innate immune surveillance. Involved in the occurrence of miconazole-tolerant persisters in biofilms. Persisters are cells that survive high doses of an antimicrobial agent. The unusual attributes of SOD5-like fungal proteins, including the absence of zinc and an open active site that readily captures extracellular copper, make these SODs well suited to meet challenges in zinc and copper availability at the host-pathogen interface. This chain is Cell surface Cu-only superoxide dismutase 5 (SOD5), found in Candida albicans (strain SC5314 / ATCC MYA-2876) (Yeast).